A 1024-amino-acid chain; its full sequence is Multidrug resistance protein MdtC (1024 aa).

Helical transmembrane passes span 12 to 32, 333 to 353, 360 to 380, 387 to 407, 431 to 451, 463 to 483, 528 to 548, 853 to 873, 875 to 895, 897 to 917, 953 to 973, and 984 to 1004; these read VATT…FSLL, EVER…FLFL, LIPA…MYLC, LSLM…IVVL, VGFT…PLLL, FAVT…TLTP, WVMV…ISIP, LWLI…LYES, VHPL…LLAL, LFDA…IGIV, PILM…ISSG, and ITIV…TPVV.

It belongs to the resistance-nodulation-cell division (RND) (TC 2.A.6) family. MdtC subfamily. Part of a tripartite efflux system composed of MdtA, MdtB and MdtC. MdtC forms a heteromultimer with MdtB.

The protein localises to the cell inner membrane. The sequence is that of Multidrug resistance protein MdtC from Yersinia enterocolitica serotype O:8 / biotype 1B (strain NCTC 13174 / 8081).